The primary structure comprises 170 residues: Myelin-associated oligodendrocyte basic protein (170 aa).

The disordered stretch occupies residues 69–170; sequence SRRATSPQRP…GSPTRAPRFW (102 aa). Positions 82 to 92 are enriched in low complexity; sequence PAASPVVVRAP. S85, S98, and S107 each carry phosphoserine. 2 consecutive repeat copies span residues 93–101 and 105–110. The 3 X 9 AA approximate tandem repeats stretch occupies residues 93 to 115; that stretch reads PAKPKSPLMPAKPRSPPRPAKPR. One copy of the 3; half-length repeat lies at 111 to 115; it reads PAKPR. Basic and acidic residues predominate over residues 118–130; the sequence is SRTERQPRPRPEV. Residues 138–151 show a composition bias toward low complexity; sequence KPPQKSKQPARSSP.

It localises to the cytoplasm. The protein resides in the perinuclear region. May play a role in compacting or stabilizing the myelin sheath possibly by binding the negatively charged acidic phospholipids of the cytoplasmic membrane. The protein is Myelin-associated oligodendrocyte basic protein (Mobp) of Mus musculus (Mouse).